The following is a 127-amino-acid chain: RxLR effector protein CRE6 (127 aa).

The N-terminal stretch at 1–19 (MIRNALLVLVFVLIGTISA) is a signal peptide. A RxLR-dEER motif is present at residues 48–67 (RLLRQGSVKEGGVHDATEER).

Belongs to the RxLR effector family.

The protein resides in the secreted. It localises to the host cell. Its function is as follows. Effector that is involved in host plant infection. Contributes to virulence during the early infection stage, by inhibiting plant defense responses induced by both PAMP-triggered immunity (PTI) and effector-triggered immunity (ETI). The sequence is that of RxLR effector protein CRE6 from Phytophthora infestans (strain T30-4) (Potato late blight agent).